Reading from the N-terminus, the 128-residue chain is Arginine decarboxylase proenzyme (128 aa).

The Schiff-base intermediate with substrate; via pyruvic acid role is filled by Ser-76. Pyruvic acid (Ser); by autocatalysis is present on Ser-76. His-81 acts as the Proton acceptor; for processing activity in catalysis. Catalysis depends on Cys-96, which acts as the Proton donor; for catalytic activity.

It belongs to the prokaryotic AdoMetDC family. Type 1 subfamily. As to quaternary structure, heterooctamer of four alpha and four beta chains arranged as a tetramer of alpha/beta heterodimers. The cofactor is pyruvate. In terms of processing, is synthesized initially as an inactive proenzyme. Formation of the active enzyme involves a self-maturation process in which the active site pyruvoyl group is generated from an internal serine residue via an autocatalytic post-translational modification. Two non-identical subunits are generated from the proenzyme in this reaction, and the pyruvate is formed at the N-terminus of the alpha chain, which is derived from the carboxyl end of the proenzyme. The post-translation cleavage follows an unusual pathway, termed non-hydrolytic serinolysis, in which the side chain hydroxyl group of the serine supplies its oxygen atom to form the C-terminus of the beta chain, while the remainder of the serine residue undergoes an oxidative deamination to produce ammonia and the pyruvoyl group blocking the N-terminus of the alpha chain.

It carries out the reaction L-arginine + H(+) = agmatine + CO2. Its pathway is amine and polyamine biosynthesis; agmatine biosynthesis; agmatine from L-arginine: step 1/1. In terms of biological role, specifically catalyzes the decarboxylation of L-arginine to agmatine. Has no S-adenosylmethionine decarboxylase (AdoMetDC) activity. This is Arginine decarboxylase proenzyme from Metallosphaera sedula (strain ATCC 51363 / DSM 5348 / JCM 9185 / NBRC 15509 / TH2).